The sequence spans 473 residues: Adenosylhomocysteinase (473 aa).

Residues threonine 64, aspartate 139, and glutamate 199 each contribute to the substrate site. Position 200-202 (200-202 (TTT)) interacts with NAD(+). Lysine 229 and aspartate 233 together coordinate substrate. NAD(+) is bound by residues asparagine 234, 263–268 (GYGDVG), glutamate 286, asparagine 321, 342–344 (IGH), and asparagine 387.

It belongs to the adenosylhomocysteinase family. Requires NAD(+) as cofactor.

The protein resides in the cytoplasm. It carries out the reaction S-adenosyl-L-homocysteine + H2O = L-homocysteine + adenosine. The protein operates within amino-acid biosynthesis; L-homocysteine biosynthesis; L-homocysteine from S-adenosyl-L-homocysteine: step 1/1. In terms of biological role, may play a key role in the regulation of the intracellular concentration of adenosylhomocysteine. This chain is Adenosylhomocysteinase, found in Burkholderia mallei (strain SAVP1).